The following is a 77-amino-acid chain: U8-lycotoxin-Ls1j (77 aa).

A signal peptide spans 1 to 20 (MKLIIFTGLILFAIVSLIEA). A propeptide spanning residues 21–26 (QANNEK) is cleaved from the precursor.

This sequence belongs to the neurotoxin 19 (CSTX) family. 08 (U8-Lctx) subfamily. In terms of processing, contains 4 disulfide bonds. In terms of tissue distribution, expressed by the venom gland.

It localises to the secreted. The protein is U8-lycotoxin-Ls1j of Lycosa singoriensis (Wolf spider).